The chain runs to 273 residues: NH(3)-dependent NAD(+) synthetase (273 aa).

45-52 (GISGGQDS) is an ATP binding site. Aspartate 51 contacts Mg(2+). Arginine 139 serves as a coordination point for deamido-NAD(+). Threonine 159 contributes to the ATP binding site. Glutamate 164 lines the Mg(2+) pocket. Deamido-NAD(+) is bound by residues lysine 172 and aspartate 179. Residues lysine 188 and threonine 210 each contribute to the ATP site. 259–260 (HK) provides a ligand contact to deamido-NAD(+).

Belongs to the NAD synthetase family. In terms of assembly, homodimer.

It catalyses the reaction deamido-NAD(+) + NH4(+) + ATP = AMP + diphosphate + NAD(+) + H(+). The protein operates within cofactor biosynthesis; NAD(+) biosynthesis; NAD(+) from deamido-NAD(+) (ammonia route): step 1/1. Its function is as follows. Catalyzes the ATP-dependent amidation of deamido-NAD to form NAD. Uses ammonia as a nitrogen source. This Bacillus pumilus (strain SAFR-032) protein is NH(3)-dependent NAD(+) synthetase.